The primary structure comprises 886 residues: Vam6/Vps39-like protein (886 aa).

The 280-residue stretch at 15–294 (PLQIDCLAAW…RFITSGGSNI (280 aa)) folds into the CNH domain. The CHCR repeat unit spans residues 573 to 750 (FTEDLPEVES…LLRMYLSPPS (178 aa)).

The protein belongs to the VAM6/VPS39 family. Homooligomer. Interacts with TGFBR2 and, less efficiently, with TGFBR1; interaction with TGFBR2 is independent of the receptor kinase activity and of the presence of TGF-beta. Also interacts with ACVR2B, but not with BMPR2. Interacts with SMAD4, preferentially following TGF-beta treatment. Does not interact with SAMD2 or SMAD3. Component of the homotypic fusion and vacuole protein sorting (HOPS) complex; the core of which composed of the class C Vps proteins VPS11, VPS16, VPS18 and VPS33A, is associated with VPS39 and VPS41. Interacts with PLEKHM2; involved in VPS39 recruitment to ARL8B-containing lysosomes. Associates with adapter protein complex 3 (AP-3) and clathrin:AP-3 complexes. Interacts with STX17; this interaction is increased in the absence of TMEM39A. Interacts with RAB7, RAB2A and RAB2B. Interacts with RAB2A (GTP-bound); the interaction contributes to obtaining a functional HOPS complex that promotes autophagosome-lysosome membrane fusion driven by STX17-SNAP29-VAMP8. Interacts with RAB39A (GTP-bound) and RAB39B (GTP-bound); interaction with RAB39A contributes to obtaining a functional HOPS complex. In terms of assembly, (Microbial infection) Interacts with SARS coronavirus-2/SARS-CoV-2 ORF3A protein; the interaction is direct and sequestrates VPS39, thereby preventing HOPS complex from interacting with the autophagosomal SNARE protein STX17. ORF3A enhances the interaction of VPS39 with VPS11 and VPS18, while its interaction with the VPS16:VPS33A module is attenuated. Widely expressed, with highest levels in heart, skeletal muscle, kidney, pancreas, brain, placenta and spleen.

The protein localises to the cytoplasm. Its subcellular location is the lysosome membrane. It is found in the late endosome membrane. Its function is as follows. Regulator of TGF-beta/activin signaling, inhibiting SMAD3- and activating SMAD2-dependent transcription. Acts by interfering with SMAD3/SMAD4 complex formation, this would lead to inhibition of SMAD3-dependent transcription and relieve SMAD3 inhibition of SMAD2-dependent promoters, thus increasing SMAD2-dependent transcription. Does not affect TGF-beta-induced SMAD2 or SMAD3 phosphorylation, nor SMAD2/SMAD4 complex formation. Functionally, plays a role in vesicle-mediated protein trafficking to lysosomal compartments including the endocytic membrane transport and autophagic pathways. Acts as a component of the HOPS endosomal tethering complex. This complex is proposed to be involved in the Rab5-to-Rab7 endosome conversion probably implicating MON1A/B, and via binding SNAREs and SNARE complexes to mediate tethering and docking events during SNARE-mediated membrane fusion. The HOPS complex is proposed to be recruited to Rab7 on the late endosomal membrane and to regulate late endocytic, phagocytic and autophagic traffic towards lysosomes. Involved in homotypic vesicle fusions between late endosomes and in heterotypic fusions between late endosomes and lysosomes. Required for fusion of endosomes and autophagosomes with lysosomes. This is Vam6/Vps39-like protein from Homo sapiens (Human).